The chain runs to 255 residues: tRNA (guanine-N(7)-)-methyltransferase (255 aa).

Residues 1-37 are disordered; sequence MTAAASDPHNPRSSADDTASPRCESGQGSFFGRRKGH. 4 residues coordinate S-adenosyl-L-methionine: glutamate 80, glutamate 105, aspartate 132, and aspartate 154. The active site involves aspartate 154. Substrate-binding residues include lysine 158 and aspartate 190.

This sequence belongs to the class I-like SAM-binding methyltransferase superfamily. TrmB family.

The catalysed reaction is guanosine(46) in tRNA + S-adenosyl-L-methionine = N(7)-methylguanosine(46) in tRNA + S-adenosyl-L-homocysteine. The protein operates within tRNA modification; N(7)-methylguanine-tRNA biosynthesis. Catalyzes the formation of N(7)-methylguanine at position 46 (m7G46) in tRNA. The chain is tRNA (guanine-N(7)-)-methyltransferase from Nitrobacter hamburgensis (strain DSM 10229 / NCIMB 13809 / X14).